The following is a 97-amino-acid chain: Citrate lyase acyl carrier protein (97 aa).

An O-(phosphoribosyl dephospho-coenzyme A)serine modification is found at serine 14.

The protein belongs to the CitD family. In terms of assembly, oligomer with a subunit composition of (alpha,beta,gamma)6.

The protein localises to the cytoplasm. Its function is as follows. Covalent carrier of the coenzyme of citrate lyase. This Escherichia fergusonii (strain ATCC 35469 / DSM 13698 / CCUG 18766 / IAM 14443 / JCM 21226 / LMG 7866 / NBRC 102419 / NCTC 12128 / CDC 0568-73) protein is Citrate lyase acyl carrier protein.